A 495-amino-acid chain; its full sequence is Membrane-bound lytic murein transglycosylase F (495 aa).

A signal peptide spans 1–29 (MEIRKLSLSTIRSIITSLSVLVLVISASA). The interval 30–273 (TLVRSTPPNV…VTKHFFERHI (244 aa)) is non-LT domain. Positions 274 to 495 (DEVTTGEAMV…TAAQGENLSL (222 aa)) are LT domain. E320 is a catalytic residue.

The protein in the N-terminal section; belongs to the bacterial solute-binding protein 3 family. This sequence in the C-terminal section; belongs to the transglycosylase Slt family.

Its subcellular location is the cell outer membrane. It catalyses the reaction Exolytic cleavage of the (1-&gt;4)-beta-glycosidic linkage between N-acetylmuramic acid (MurNAc) and N-acetylglucosamine (GlcNAc) residues in peptidoglycan, from either the reducing or the non-reducing ends of the peptidoglycan chains, with concomitant formation of a 1,6-anhydrobond in the MurNAc residue.. Murein-degrading enzyme that degrades murein glycan strands and insoluble, high-molecular weight murein sacculi, with the concomitant formation of a 1,6-anhydromuramoyl product. Lytic transglycosylases (LTs) play an integral role in the metabolism of the peptidoglycan (PG) sacculus. Their lytic action creates space within the PG sacculus to allow for its expansion as well as for the insertion of various structures such as secretion systems and flagella. In Cellvibrio japonicus (strain Ueda107) (Pseudomonas fluorescens subsp. cellulosa), this protein is Membrane-bound lytic murein transglycosylase F.